Reading from the N-terminus, the 422-residue chain is Multifunctional CCA protein (422 aa).

Residues glycine 8 and arginine 11 each coordinate ATP. CTP-binding residues include glycine 8 and arginine 11. Positions 21 and 23 each coordinate Mg(2+). Residues arginine 91, arginine 137, and arginine 140 each contribute to the ATP site. The CTP site is built by arginine 91, arginine 137, and arginine 140. The region spanning 228–329 (TGLHSLMALE…VKLLQSCDAW (102 aa)) is the HD domain. The segment at 403–422 (FKQDNAPEAQEKGGEDVGLT) is disordered.

This sequence belongs to the tRNA nucleotidyltransferase/poly(A) polymerase family. Bacterial CCA-adding enzyme type 1 subfamily. In terms of assembly, monomer. Can also form homodimers and oligomers. The cofactor is Mg(2+). Ni(2+) is required as a cofactor.

The catalysed reaction is a tRNA precursor + 2 CTP + ATP = a tRNA with a 3' CCA end + 3 diphosphate. The enzyme catalyses a tRNA with a 3' CCA end + 2 CTP + ATP = a tRNA with a 3' CCACCA end + 3 diphosphate. Its function is as follows. Catalyzes the addition and repair of the essential 3'-terminal CCA sequence in tRNAs without using a nucleic acid template. Adds these three nucleotides in the order of C, C, and A to the tRNA nucleotide-73, using CTP and ATP as substrates and producing inorganic pyrophosphate. tRNA 3'-terminal CCA addition is required both for tRNA processing and repair. Also involved in tRNA surveillance by mediating tandem CCA addition to generate a CCACCA at the 3' terminus of unstable tRNAs. While stable tRNAs receive only 3'-terminal CCA, unstable tRNAs are marked with CCACCA and rapidly degraded. The protein is Multifunctional CCA protein of Hahella chejuensis (strain KCTC 2396).